The chain runs to 330 residues: Aquaporin Lacbi1:307192 (330 aa).

Residues 1–40 lie on the Cytoplasmic side of the membrane; that stretch reads MSATPIIHLRDVKKRTGVLNAWERVRNKPQVHWAMECFAE. The helical transmembrane segment at 41-61 threads the bilayer; it reads ALGVFFYVYFGLGSTAAWVIG. Residues 62 to 71 are Extracellular-facing; sequence NILKQSGLSS. The chain crosses the membrane as a helical span at residues 72–92; sequence VFQIGFAYAFGILFAIGVCAA. At 93–124 the chain is on the cytoplasmic side; it reads TSGGHFNPCVTIAFTIFRGFPPLKAVRYIVAQ. Positions 99–101 match the NPA 1 motif; the sequence is NPC. The chain crosses the membrane as a helical span at residues 125–145; sequence ILGAYIASALVYNQWKVLIVE. Topologically, residues 146-157 are extracellular; sequence SELLLKQAGVYE. A helical transmembrane segment spans residues 158–178; that stretch reads TTMFTPNGPAGIFALYLLPGA. The Cytoplasmic portion of the chain corresponds to 179-183; sequence QTLPR. Residues 184-204 form a helical membrane-spanning segment; that stretch reads AFLNEFVNCFVLALVIWAALD. Topologically, residues 205-207 are extracellular; sequence PTS. A helical transmembrane segment spans residues 208–228; it reads FMIPPVMAPFIIAAAYAGSIW. Residues 229-264 lie on the Cytoplasmic side of the membrane; that stretch reads GYAVPAISLNSARDIGCRLFALTIWGKSAAGGSYSA. Residues 238 to 240 carry the NPA 2 motif; it reads NSA. A helical transmembrane segment spans residues 265–285; the sequence is ITALVNIPATLLAAVVYELFL. At 286-330 the chain is on the extracellular side; sequence VDSDRVVAGSHLEFMNVAANHRRHRHQAEDDNHGDADDSSQEKPV. Residues 308 to 330 form a disordered region; the sequence is RHRHQAEDDNHGDADDSSQEKPV. Residues 312 to 330 are compositionally biased toward basic and acidic residues; that stretch reads QAEDDNHGDADDSSQEKPV.

Belongs to the MIP/aquaporin (TC 1.A.8) family.

It is found in the membrane. Its function is as follows. Water channel-like protein that does not show transport of water nor ammonium across membranes. The chain is Aquaporin Lacbi1:307192 from Laccaria bicolor (strain S238N-H82 / ATCC MYA-4686) (Bicoloured deceiver).